We begin with the raw amino-acid sequence, 260 residues long: Snake venom serine protease homolog (260 aa).

Positions 1-18 (MVLIRVLANLLILQLSYA) are cleaved as a signal peptide. The propeptide occupies 19 to 24 (QKASEL). Positions 25–251 (IIGGDECNIN…YTEWIRSIIA (227 aa)) constitute a Peptidase S1 domain. Disulfide bonds link Cys31–Cys165, Cys52–Cys68, Cys100–Cys258, Cys144–Cys212, Cys176–Cys191, and Cys202–Cys227. N-linked (GlcNAc...) asparagine glycosylation is present at Asn83.

It belongs to the peptidase S1 family. Snake venom subfamily. As to expression, expressed by the venom gland.

The protein localises to the secreted. Functionally, snake venom serine protease homolog that may act in the hemostasis system of the prey. This chain is Snake venom serine protease homolog, found in Bothrops jararacussu (Jararacussu).